Here is a 331-residue protein sequence, read N- to C-terminus: Ketol-acid reductoisomerase (NADP(+)) (331 aa).

Residues 2–182 (AKVYYDEDAN…GGTKGGVLET (181 aa)) form the KARI N-terminal Rossmann domain. Residues 25-28 (YGSQ), Ser51, Ser53, and 83-86 (DEKQ) contribute to the NADP(+) site. The active site involves His108. Position 134 (Gly134) interacts with NADP(+). Positions 183–328 (TFKDETETDL…VELRAMMPWL (146 aa)) constitute a KARI C-terminal knotted domain. Asp191, Glu195, Glu227, and Glu231 together coordinate Mg(2+). Ser252 is a substrate binding site.

Belongs to the ketol-acid reductoisomerase family. Mg(2+) is required as a cofactor.

The enzyme catalyses (2R)-2,3-dihydroxy-3-methylbutanoate + NADP(+) = (2S)-2-acetolactate + NADPH + H(+). It carries out the reaction (2R,3R)-2,3-dihydroxy-3-methylpentanoate + NADP(+) = (S)-2-ethyl-2-hydroxy-3-oxobutanoate + NADPH + H(+). The protein operates within amino-acid biosynthesis; L-isoleucine biosynthesis; L-isoleucine from 2-oxobutanoate: step 2/4. It functions in the pathway amino-acid biosynthesis; L-valine biosynthesis; L-valine from pyruvate: step 2/4. Involved in the biosynthesis of branched-chain amino acids (BCAA). Catalyzes an alkyl-migration followed by a ketol-acid reduction of (S)-2-acetolactate (S2AL) to yield (R)-2,3-dihydroxy-isovalerate. In the isomerase reaction, S2AL is rearranged via a Mg-dependent methyl migration to produce 3-hydroxy-3-methyl-2-ketobutyrate (HMKB). In the reductase reaction, this 2-ketoacid undergoes a metal-dependent reduction by NADPH to yield (R)-2,3-dihydroxy-isovalerate. This is Ketol-acid reductoisomerase (NADP(+)) from Clostridium novyi (strain NT).